Reading from the N-terminus, the 234-residue chain is 2-C-methyl-D-erythritol 4-phosphate cytidylyltransferase (234 aa).

It belongs to the IspD/TarI cytidylyltransferase family. IspD subfamily.

The enzyme catalyses 2-C-methyl-D-erythritol 4-phosphate + CTP + H(+) = 4-CDP-2-C-methyl-D-erythritol + diphosphate. It participates in isoprenoid biosynthesis; isopentenyl diphosphate biosynthesis via DXP pathway; isopentenyl diphosphate from 1-deoxy-D-xylulose 5-phosphate: step 2/6. Functionally, catalyzes the formation of 4-diphosphocytidyl-2-C-methyl-D-erythritol from CTP and 2-C-methyl-D-erythritol 4-phosphate (MEP). This is 2-C-methyl-D-erythritol 4-phosphate cytidylyltransferase from Desulforamulus reducens (strain ATCC BAA-1160 / DSM 100696 / MI-1) (Desulfotomaculum reducens).